A 434-amino-acid chain; its full sequence is Pre-mRNA-splicing factor PRP46 (434 aa).

WD repeat units lie at residues 120–160, 163–202, 205–244, 247–288, 290–329, 331–369, and 380–419; these read GHTG…LKIT, GHVM…AIRD, GHLS…EIMV, GHKS…KVLT, HSRN…TNFQ, QNTG…KYQS, and ESER…TEDT.

Belongs to the WD repeat PRL1/PRL2 family. Associated with the spliceosome.

Its subcellular location is the cytoplasm. The protein resides in the nucleus. In terms of biological role, involved in pre-mRNA splicing and required for cell cycle progression at G2/M. This chain is Pre-mRNA-splicing factor PRP46 (PRP46), found in Kluyveromyces lactis (strain ATCC 8585 / CBS 2359 / DSM 70799 / NBRC 1267 / NRRL Y-1140 / WM37) (Yeast).